A 206-amino-acid polypeptide reads, in one-letter code: Cytochrome c oxidase assembly protein CtaG (206 aa).

Residues 1-12 (MSKKPAGKNSNR) are Cytoplasmic-facing. Residues 13 to 35 (IVAAVCLAFFTGMIGMAYAAVPL) form a helical; Signal-anchor for type II membrane protein membrane-spanning segment. The Periplasmic segment spans residues 36 to 206 (YKMFCQATGY…ISDTEANLGG (171 aa)). The disordered stretch occupies residues 184–206 (VASSEPVQGTSKIISDTEANLGG). The segment covering 188 to 206 (EPVQGTSKIISDTEANLGG) has biased composition (polar residues).

The protein belongs to the COX11/CtaG family.

The protein resides in the cell inner membrane. Functionally, exerts its effect at some terminal stage of cytochrome c oxidase synthesis, probably by being involved in the insertion of the copper B into subunit I. In Mesorhizobium japonicum (strain LMG 29417 / CECT 9101 / MAFF 303099) (Mesorhizobium loti (strain MAFF 303099)), this protein is Cytochrome c oxidase assembly protein CtaG.